A 238-amino-acid chain; its full sequence is ATP synthase subunit a (238 aa).

A run of 5 helical transmembrane segments spans residues I15–I35, Y76–M96, P111–I131, L167–L187, and A208–G230.

This sequence belongs to the ATPase A chain family. F-type ATPases have 2 components, CF(1) - the catalytic core - and CF(0) - the membrane proton channel. CF(1) has five subunits: alpha(3), beta(3), gamma(1), delta(1), epsilon(1). CF(0) has three main subunits: a(1), b(2) and c(9-12). The alpha and beta chains form an alternating ring which encloses part of the gamma chain. CF(1) is attached to CF(0) by a central stalk formed by the gamma and epsilon chains, while a peripheral stalk is formed by the delta and b chains.

The protein resides in the cell membrane. Its function is as follows. Key component of the proton channel; it plays a direct role in the translocation of protons across the membrane. The protein is ATP synthase subunit a of Streptococcus pneumoniae (strain 70585).